Here is an 89-residue protein sequence, read N- to C-terminus: Small ribosomal subunit protein uS15 (89 aa).

The protein belongs to the universal ribosomal protein uS15 family. As to quaternary structure, part of the 30S ribosomal subunit. Forms a bridge to the 50S subunit in the 70S ribosome, contacting the 23S rRNA.

Its function is as follows. One of the primary rRNA binding proteins, it binds directly to 16S rRNA where it helps nucleate assembly of the platform of the 30S subunit by binding and bridging several RNA helices of the 16S rRNA. Functionally, forms an intersubunit bridge (bridge B4) with the 23S rRNA of the 50S subunit in the ribosome. The sequence is that of Small ribosomal subunit protein uS15 from Salinispora arenicola (strain CNS-205).